A 335-amino-acid chain; its full sequence is Glyceraldehyde-3-phosphate dehydrogenase, cytosolic (335 aa).

NAD(+) contacts are provided by residues 13 to 14 (RI), Asp35, and Arg80. Residues 151 to 153 (SCT), Thr182, 211 to 212 (TG), and Arg234 contribute to the D-glyceraldehyde 3-phosphate site. Cys152 acts as the Nucleophile in catalysis. Asn316 contributes to the NAD(+) binding site.

Belongs to the glyceraldehyde-3-phosphate dehydrogenase family. As to quaternary structure, homotetramer.

It localises to the cytoplasm. It catalyses the reaction D-glyceraldehyde 3-phosphate + phosphate + NAD(+) = (2R)-3-phospho-glyceroyl phosphate + NADH + H(+). The protein operates within carbohydrate degradation; glycolysis; pyruvate from D-glyceraldehyde 3-phosphate: step 1/5. In Chondrus crispus (Carrageen Irish moss), this protein is Glyceraldehyde-3-phosphate dehydrogenase, cytosolic (GAPC).